We begin with the raw amino-acid sequence, 79 residues long: uncharacterized protein (79 aa).

The signal sequence occupies residues 1 to 19 (MKYVALAFVLSLVILQISA). The interval 52–71 (RGRKSRTQSGRNQGKSTSDS) is disordered. Over residues 58-71 (TQSGRNQGKSTSDS) the composition is skewed to polar residues.

As to expression, nacreous layer of shell (at protein level). Expressed primarily in the mantle with highest level in the mantle pallium and lower level in the mantle edge.

The protein resides in the secreted. This is an uncharacterized protein from Margaritifera margaritifera (Freshwater pearl mussel).